The chain runs to 282 residues: MAAAPQAPGRGSVRKTRPLPVKTSLNNPYSICWGVLDREDMHFILQTLEDRIQSLGLQKIEDRKRKKKQPPLKKQSGDTSSIDVDTGEDLKKEKPKGDAQASGWTPVDVRKQLAIGINEVTRALERNELLLALACKSAKPAIVTSHLVQLSVSRGVPACQVPRLSERLAPVLGLKCVLALGFKRNTTAFGEELRAILPRVPRLNVAWLQDALEDPRENLQTESLESQDEEILDTSFEDLSKPKRKLAEGQQPVVLQPLKIKKLIPNPNKIRKPPKSKRTASK.

2 disordered regions span residues 1–21 (MAAA…PLPV) and 61–103 (EDRK…QASG). Ala-2 carries the post-translational modification N-acetylalanine. Phosphoserine is present on Ser-12. The segment covering 88 to 97 (EDLKKEKPKG) has biased composition (basic and acidic residues). 2 positions are modified to phosphoserine: Ser-226 and Ser-235. Residues 262–282 (KLIPNPNKIRKPPKSKRTASK) form a disordered region. The span at 269-282 (KIRKPPKSKRTASK) shows a compositional bias: basic residues.

The protein belongs to the eukaryotic ribosomal protein eL8 family. Component of nuclear RNase P and RNase MRP ribonucleoproteins. RNase P consists of a catalytic RNA moiety and about 10 protein subunits; POP1, POP4, POP5, POP7, RPP14, RPP21, RPP25, RPP30, RPP38 and RPP40. Within the RNase P complex, POP1, POP7 and RPP25 form the 'finger' subcomplex, POP5, RPP14, RPP40 and homodimeric RPP30 form the 'palm' subcomplex, and RPP21, POP4 and RPP38 form the 'wrist' subcomplex. All subunits of the RNase P complex interact with the catalytic RNA. Several subunits of RNase P are also part of the RNase MRP complex. RNase MRP consists of a catalytic RNA moiety and about 8 protein subunits; POP1, POP7, RPP25, RPP30, RPP38, RPP40 and possibly also POP4 and POP5.

It is found in the nucleus. The protein localises to the nucleolus. Functionally, component of ribonuclease P, a ribonucleoprotein complex that generates mature tRNA molecules by cleaving their 5'-ends. Also a component of the MRP ribonuclease complex, which cleaves pre-rRNA sequences. The polypeptide is Ribonuclease P protein subunit p38 (RPP38) (Bos taurus (Bovine)).